A 637-amino-acid chain; its full sequence is Threonine--tRNA ligase (637 aa).

One can recognise a TGS domain in the interval 1 to 61; that stretch reads MPNVKLPDGN…KEDCSLIIVT (61 aa). Positions 242–533 are catalytic; the sequence is DHRKLGKALD…LIEHYAGKLP (292 aa). Zn(2+)-binding residues include cysteine 333, histidine 384, and histidine 510.

This sequence belongs to the class-II aminoacyl-tRNA synthetase family. As to quaternary structure, homodimer. Requires Zn(2+) as cofactor.

It localises to the cytoplasm. It carries out the reaction tRNA(Thr) + L-threonine + ATP = L-threonyl-tRNA(Thr) + AMP + diphosphate + H(+). Catalyzes the attachment of threonine to tRNA(Thr) in a two-step reaction: L-threonine is first activated by ATP to form Thr-AMP and then transferred to the acceptor end of tRNA(Thr). Also edits incorrectly charged L-seryl-tRNA(Thr). The chain is Threonine--tRNA ligase from Legionella pneumophila subsp. pneumophila (strain Philadelphia 1 / ATCC 33152 / DSM 7513).